Here is a 207-residue protein sequence, read N- to C-terminus: Probable GTP-binding protein EngB (207 aa).

An EngB-type G domain is found at 24 to 199; the sequence is GGYEVAFAGR…RGIVGGWLGL (176 aa). GTP contacts are provided by residues 32 to 39, 59 to 63, 77 to 80, 144 to 147, and 178 to 180; these read GRSNAGKS, GRTQQ, DLPG, TKAD, and YSG. Mg(2+)-binding residues include S39 and T61.

This sequence belongs to the TRAFAC class TrmE-Era-EngA-EngB-Septin-like GTPase superfamily. EngB GTPase family. Requires Mg(2+) as cofactor.

Functionally, necessary for normal cell division and for the maintenance of normal septation. The polypeptide is Probable GTP-binding protein EngB (Xanthomonas campestris pv. campestris (strain 8004)).